A 446-amino-acid chain; its full sequence is Tubulin beta-5 chain (446 aa).

The short motif at 1–4 (MREI) is the MREI motif element. Positions 11, 69, 138, 142, 143, 144, 204, and 226 each coordinate GTP. Glu69 serves as a coordination point for Mg(2+). Glu438 bears the 5-glutamyl polyglutamate mark.

The protein belongs to the tubulin family. In terms of assembly, dimer of alpha and beta chains. A typical microtubule is a hollow water-filled tube with an outer diameter of 25 nm and an inner diameter of 15 nM. Alpha-beta heterodimers associate head-to-tail to form protofilaments running lengthwise along the microtubule wall with the beta-tubulin subunit facing the microtubule plus end conferring a structural polarity. Microtubules usually have 13 protofilaments but different protofilament numbers can be found in some organisms and specialized cells. It depends on Mg(2+) as a cofactor. Post-translationally, some glutamate residues at the C-terminus are polyglycylated, resulting in polyglycine chains on the gamma-carboxyl group. Glycylation is mainly limited to tubulin incorporated into axonemes (cilia and flagella) whereas glutamylation is prevalent in neuronal cells, centrioles, axonemes, and the mitotic spindle. Both modifications can coexist on the same protein on adjacent residues, and lowering polyglycylation levels increases polyglutamylation, and reciprocally. The precise function of polyglycylation is still unclear. In terms of processing, some glutamate residues at the C-terminus are polyglutamylated, resulting in polyglutamate chains on the gamma-carboxyl group. Polyglutamylation plays a key role in microtubule severing by spastin (SPAST). SPAST preferentially recognizes and acts on microtubules decorated with short polyglutamate tails: severing activity by SPAST increases as the number of glutamates per tubulin rises from one to eight, but decreases beyond this glutamylation threshold.

The protein resides in the cytoplasm. The protein localises to the cytoskeleton. In terms of biological role, tubulin is the major constituent of microtubules, a cylinder consisting of laterally associated linear protofilaments composed of alpha- and beta-tubulin heterodimers. Microtubules grow by the addition of GTP-tubulin dimers to the microtubule end, where a stabilizing cap forms. Below the cap, tubulin dimers are in GDP-bound state, owing to GTPase activity of alpha-tubulin. The protein is Tubulin beta-5 chain of Gallus gallus (Chicken).